Consider the following 194-residue polypeptide: Segregation and condensation protein B (194 aa).

Belongs to the ScpB family. As to quaternary structure, homodimer. Homodimerization may be required to stabilize the binding of ScpA to the Smc head domains. Component of a cohesin-like complex composed of ScpA, ScpB and the Smc homodimer, in which ScpA and ScpB bind to the head domain of Smc. The presence of the three proteins is required for the association of the complex with DNA.

It is found in the cytoplasm. Functionally, participates in chromosomal partition during cell division. May act via the formation of a condensin-like complex containing Smc and ScpA that pull DNA away from mid-cell into both cell halves. The protein is Segregation and condensation protein B of Streptococcus agalactiae serotype Ia (strain ATCC 27591 / A909 / CDC SS700).